Reading from the N-terminus, the 163-residue chain is Disulfide bond formation protein B 1 (163 aa).

Topologically, residues 1–9 (MPLASPRQL) are cytoplasmic. The chain crosses the membrane as a helical span at residues 10–26 (FLLAFLACVAIMGGALY). Over 27–44 (LEHVVGLEACPLCVVQRI) the chain is Periplasmic. The cysteines at positions 36 and 39 are disulfide-linked. Residues 45–61 (FFILIGLTCLAGAIQGP) traverse the membrane as a helical segment. Over 62-67 (GLRGRR) the chain is Cytoplasmic. The chain crosses the membrane as a helical span at residues 68–85 (IYSVLVFLLALGGGATAA). Topologically, residues 86 to 142 (RQVWLQTVPLDQLPACLPSLDYMMQALPFQEVIRLVLHGTADCAQVSWTLFTLSIPE) are periplasmic. The cysteines at positions 101 and 128 are disulfide-linked. The chain crosses the membrane as a helical span at residues 143-161 (WSLLAFVAYLGFSIVQFLR). Residues 162-163 (RA) lie on the Cytoplasmic side of the membrane.

Belongs to the DsbB family.

Its subcellular location is the cell inner membrane. Functionally, required for disulfide bond formation in some periplasmic proteins. Acts by oxidizing the DsbA protein. The sequence is that of Disulfide bond formation protein B 1 (dsbB1) from Pseudomonas aeruginosa (strain ATCC 15692 / DSM 22644 / CIP 104116 / JCM 14847 / LMG 12228 / 1C / PRS 101 / PAO1).